The primary structure comprises 550 residues: Zinc finger protein 426 (550 aa).

The 72-residue stretch at 39–110 (VSFEDVIVDF…KIVFPEWKLQ (72 aa)) folds into the KRAB domain. 11 consecutive C2H2-type zinc fingers follow at residues 219 to 241 (FECSDCGKSFMSQSHLQTHQRTH), 274 to 296 (HRCKECGKGYRYPAYLNIHMRTH), 302 to 324 (YECKECGKAFNYSNSFQIHGRTH), 330 to 352 (YVCSQCGKAFTQHSGLSIHVRSH), 358 to 380 (YGCKECGKAFLTSSRLIQHIRTH), 386 to 408 (FVCVKCGKAFAISSNLNGHLKLH), 414 to 436 (CECKICGKAFGYLSCLNNHMRTH), 442 to 464 (YTCKECGKAFNYSTHLKIHMRIH), 470 to 492 (YECKQCGKAFSHSTSFQIHERTH), 498 to 522 (YECKECGKAFICPSSFRIHEISHTH), and 528 to 550 (YKCQQCGKAYSHPRSLRRHERIH).

It is found in the nucleus. Its function is as follows. May be involved in transcriptional regulation. The sequence is that of Zinc finger protein 426 (Znf426) from Mus musculus (Mouse).